A 593-amino-acid chain; its full sequence is Tyrosine-protein phosphatase non-receptor type 11 (593 aa).

The residue at position 2 (Thr-2) is an N-acetylthreonine. SH2 domains lie at 6–102 (WFHP…KYPL) and 112–216 (WFHG…KQPL). A phosphotyrosine mark is found at Tyr-62 and Tyr-66. The Tyrosine-protein phosphatase domain occupies 247–521 (FWEEFETLQQ…RFIYMAVQHY (275 aa)). Residues Asp-425, 459-465 (CSAGIGR), and Gln-506 each bind substrate. Cys-459 acts as the Phosphocysteine intermediate in catalysis. A phosphotyrosine; by PDGFR mark is found at Tyr-542 and Tyr-580.

Belongs to the protein-tyrosine phosphatase family. Non-receptor class 2 subfamily. As to quaternary structure, interacts with CD84 and with phosphorylated SIT1 and MZPL1. Interacts with FCRL4, FCRL6 and ANKHD1. Interacts with GAREM1 (tyrosine phosphorylated); the interaction increases MAPK/ERK activity and does not affect the GRB2/SOS complex formation. Interacts with PTPNS1 and BCAR3. Interacts with phosphorylated LIME1. Interacts with SHB and INPP5D/SHIP1. Interacts with KIR2DL1; the interaction is enhanced by ARRB2. Interacts with GAB2. Interacts with TERT; the interaction retains TERT in the nucleus. Interacts with PECAM1 and FER. Interacts with EPHA2 (activated); participates in PTK2/FAK1 dephosphorylation in EPHA2 downstream signaling. Interacts with MILR1 (tyrosine phosphorylated). Interacts with FLT1 (tyrosine-phosphorylated), FLT3 (tyrosine-phosphorylated), FLT4 (tyrosine-phosphorylated), KIT and GRB2. Interacts with ROS1; mediates PTPN11 phosphorylation. Interacts with PDGFRA (tyrosine phosphorylated). Interacts with PDGFRB (tyrosine phosphorylated); this interaction increases the PTPN11 phosphatase activity. Interacts (via SH2 domain) with TEK/TIE2 (tyrosine phosphorylated). Interacts with CEACAM1 (via cytoplasmic domain); this interaction depends on the monomer/dimer equilibrium and is phosphorylation-dependent. Interacts with MPIG6B (via ITIM motif). Interacts with SIGLEC10. Interacts with Lilrb4a (when tyrosine phosphorylated). Interacts with SIGLEC10. Interacts with CLEC12B (via ITIM motif); this interaction triggers dephosphorylation and activation of PTPN11. Interacts (via SH2 domains) with NEDD9/CAS-L; the interaction is enhanced when NEDD9/CAS-L is tyrosine phosphorylated. Interacts with PIRB; when PIRB is phosphorylated by LYN at 'Tyr-794' and 'Tyr-824'. In terms of processing, phosphorylated on Tyr-542 and Tyr-580 upon receptor protein tyrosine kinase activation; which creates a binding site for GRB2 and other SH2-containing proteins. Phosphorylated upon activation of the receptor-type kinase FLT3. Phosphorylated by activated PDGFRB. Phosphorylated upon activation of the receptor-type kinase PDGFRA. Highly expressed in brain, heart and kidney.

The protein resides in the cytoplasm. It carries out the reaction O-phospho-L-tyrosyl-[protein] + H2O = L-tyrosyl-[protein] + phosphate. Functionally, acts downstream of various receptor and cytoplasmic protein tyrosine kinases to participate in the signal transduction from the cell surface to the nucleus. Positively regulates MAPK signal transduction pathway. Dephosphorylates GAB1, ARHGAP35 and EGFR. Dephosphorylates ROCK2 at 'Tyr-722' resulting in stimulation of its RhoA binding activity. Dephosphorylates CDC73. Dephosphorylates SOX9 on tyrosine residues, leading to inactivate SOX9 and promote ossification. Dephosphorylates tyrosine-phosphorylated NEDD9/CAS-L. This chain is Tyrosine-protein phosphatase non-receptor type 11 (Ptpn11), found in Mus musculus (Mouse).